Here is a 307-residue protein sequence, read N- to C-terminus: Small ribosomal subunit protein bS1 (307 aa).

S1 motif domains lie at 32–101 (GDTV…LSIR), 119–183 (DATV…LSHR), and 197–265 (GEVV…LSTK).

This sequence belongs to the bacterial ribosomal protein bS1 family.

Functionally, binds mRNA. The sequence is that of Small ribosomal subunit protein bS1 (rpsA) from Synechococcus sp. (strain ATCC 27144 / PCC 6301 / SAUG 1402/1) (Anacystis nidulans).